A 157-amino-acid chain; its full sequence is Peptide methionine sulfoxide reductase MsrA (157 aa).

The active site involves Cys-10.

It belongs to the MsrA Met sulfoxide reductase family.

It catalyses the reaction L-methionyl-[protein] + [thioredoxin]-disulfide + H2O = L-methionyl-(S)-S-oxide-[protein] + [thioredoxin]-dithiol. The enzyme catalyses [thioredoxin]-disulfide + L-methionine + H2O = L-methionine (S)-S-oxide + [thioredoxin]-dithiol. Has an important function as a repair enzyme for proteins that have been inactivated by oxidation. Catalyzes the reversible oxidation-reduction of methionine sulfoxide in proteins to methionine. In Clostridium botulinum (strain Okra / Type B1), this protein is Peptide methionine sulfoxide reductase MsrA.